Consider the following 409-residue polypeptide: Mitochondrial inner membrane protein oxa1-2 (409 aa).

The chain crosses the membrane as a helical span at residues 76 to 96 (VVYTPSLPLSSSVLASFSFLP). Topologically, residues 97 to 114 (HNILQNGLNTLHIWSGLP) are mitochondrial intermembrane. A helical membrane pass occupies residues 115 to 135 (WWASIAACAVAMRIAVFPIML). Over 136–188 (KMMKTSAKLAIINPKVAEHMSVLSKAKAEGNSELMMQATTQIQNLYKVNNVNP) the chain is Mitochondrial matrix. Residues 189 to 209 (LNLLSAPVFQGILFISFFYAL) form a helical membrane-spanning segment. Over 210–235 (KTMAGVPVEGFTDGGFWWVNDLSQPD) the chain is Mitochondrial intermembrane. Residues 236-256 (PLHIFPVANGLLMLLNIELGS) form a helical membrane-spanning segment. Residues 257-275 (ETGSNKVAMSPSMKKFFRF) are Mitochondrial matrix-facing. Residues 276-296 (LCLASPLFTMNFPMAIFMYWF) form a helical membrane-spanning segment. Residues 297–409 (PSNVFSVFQG…SVTKPTEKKD (113 aa)) lie on the Mitochondrial intermembrane side of the membrane. The disordered stretch occupies residues 369–409 (TDTNNEQKPTNNSTITKATTLSDNSQNDKSSSVTKPTEKKD). Residues 374–403 (EQKPTNNSTITKATTLSDNSQNDKSSSVTK) show a composition bias toward polar residues.

Belongs to the OXA1/ALB3/YidC family.

The protein localises to the mitochondrion inner membrane. Functionally, required for the insertion of integral membrane proteins into the mitochondrial inner membrane. Essential for the activity and assembly of cytochrome c oxidase. It is essential for viability while oxa101 is not. When both are deleted the cell is non-viable, suggesting that oxa101 act as a back-up for oxa102. This Schizosaccharomyces pombe (strain 972 / ATCC 24843) (Fission yeast) protein is Mitochondrial inner membrane protein oxa1-2 (oxa102).